A 1092-amino-acid polypeptide reads, in one-letter code: DNA polymerase delta catalytic subunit (1092 aa).

The disordered stretch occupies residues 1–71; sequence MDGKRKFNGT…SRPPPPELDP (71 aa). Positions 4 to 19 match the Nuclear localization signal motif; it reads KRKFNGTSNGHAKKPR. Zn(2+) is bound by residues Cys997, Cys1000, Cys1014, and Cys1017. The CysA-type zinc-finger motif lies at 997–1017; that stretch reads CLGCKSLMPKGYEQACLCPHC. Cys1046, Cys1049, Cys1059, and Cys1064 together coordinate [4Fe-4S] cluster. The CysB motif motif lies at 1046–1064; it reads CQRCQESLHEEVICSNRDC.

This sequence belongs to the DNA polymerase type-B family. As to quaternary structure, catalytic component of the DNA polymerase delta complex consisting of three subunits: the catalytic subunit PolD1 and two accessory subunits PolD2/Pol31 and PolD3/Pol32. Within the delta complex, interacts with both PolD2 and PolD3, and is able to interact with PolD2 in the absence of PolD3. Interacts with PCNA and PCNA2. [4Fe-4S] cluster serves as cofactor. Mg(2+) is required as a cofactor. Expressed in ovaries (at the protein level). Expressed in embryos (at the protein level).

It localises to the nucleus. The protein resides in the nucleoplasm. The enzyme catalyses DNA(n) + a 2'-deoxyribonucleoside 5'-triphosphate = DNA(n+1) + diphosphate. Its activity is regulated as follows. Inhibited by KCL. Also inhibited by carbonyldiphosphonate, aphidicolin and N-ethylmaleimide (NEM). In terms of biological role, as the catalytic component of the DNA polymerase delta complex, plays a crucial role in high fidelity genome replication, including lagging strand synthesis, DNA recombination and repair. Exhibits both DNA polymerase and 3'- to 5'-exonuclease activities. Required at the nucleus of rapidly dividing embryonic cells to activate genome replication during the earliest cell cycles. Likely to require the presence of accessory proteins PolD2 and PolD3 for full activity. The chain is DNA polymerase delta catalytic subunit from Drosophila melanogaster (Fruit fly).